The chain runs to 549 residues: Urocanate hydratase (549 aa).

NAD(+) contacts are provided by residues 46–47, glutamine 124, 170–172, glutamate 190, arginine 195, 236–237, 257–261, 267–268, and tyrosine 316; these read GG, GMG, NA, QTSAH, and YV. The active site involves cysteine 404. Residue glycine 486 coordinates NAD(+).

This sequence belongs to the urocanase family. NAD(+) serves as cofactor.

It is found in the cytoplasm. The catalysed reaction is 4-imidazolone-5-propanoate = trans-urocanate + H2O. It participates in amino-acid degradation; L-histidine degradation into L-glutamate; N-formimidoyl-L-glutamate from L-histidine: step 2/3. In terms of biological role, catalyzes the conversion of urocanate to 4-imidazolone-5-propionate. The chain is Urocanate hydratase from Caldanaerobacter subterraneus subsp. tengcongensis (strain DSM 15242 / JCM 11007 / NBRC 100824 / MB4) (Thermoanaerobacter tengcongensis).